The sequence spans 326 residues: 5,10-methylenetetrahydromethanopterin reductase (326 aa).

The protein belongs to the mer family.

Its subcellular location is the cytoplasm. It carries out the reaction 5-methyl-5,6,7,8-tetrahydromethanopterin + oxidized coenzyme F420-(gamma-L-Glu)(n) + H(+) = 5,10-methylenetetrahydromethanopterin + reduced coenzyme F420-(gamma-L-Glu)(n). Its pathway is one-carbon metabolism; methanogenesis from CO(2); methyl-coenzyme M from 5,10-methylene-5,6,7,8-tetrahydromethanopterin: step 1/2. In terms of biological role, catalyzes the reversible reduction of methylene-H(4)MPT to methyl-H(4)MPT. The protein is 5,10-methylenetetrahydromethanopterin reductase of Methanolobus tindarius.